The sequence spans 882 residues: DNA replication helicase (882 aa).

The disordered stretch occupies residues 1-29 (MAAAGGERQLDGQKPGPPHLQQPGDRPAV). 97 to 104 (GNAGSGKS) is a binding site for ATP.

The protein belongs to the herpesviridae helicase family. Associates with the primase and the primase-associated factor to form the helicase-primase complex.

The protein localises to the host nucleus. Its function is as follows. Component of the helicase/primase complex. Unwinds the DNA at the replication forks and generates single-stranded DNA for both leading and lagging strand synthesis. The primase synthesizes short RNA primers on the lagging strand that the polymerase elongates using dNTPs. Possesses helicase-like motifs and therefore may act as the helicase subunit of the complex. This chain is DNA replication helicase, found in Homo sapiens (Human).